Consider the following 710-residue polypeptide: Polyribonucleotide nucleotidyltransferase (710 aa).

Asp489 and Asp495 together coordinate Mg(2+). The KH domain occupies 556-615; the sequence is PKIDTIKIDVDKIKVVIGKGGETIDKIIAETGVKIDIDDEGNVSIYSSDQAAIDRTKEII. An S1 motif domain is found at 625 to 693; sequence GEVYHAKVIR…EKGRVDASMK (69 aa). The disordered stretch occupies residues 691 to 710; it reads SMKALIPRPPKPEKKEEKHD. Over residues 700–710 the composition is skewed to basic and acidic residues; sequence PKPEKKEEKHD.

It belongs to the polyribonucleotide nucleotidyltransferase family. Mg(2+) serves as cofactor.

Its subcellular location is the cytoplasm. The enzyme catalyses RNA(n+1) + phosphate = RNA(n) + a ribonucleoside 5'-diphosphate. Involved in mRNA degradation. Catalyzes the phosphorolysis of single-stranded polyribonucleotides processively in the 3'- to 5'-direction. This Streptococcus pyogenes serotype M4 (strain MGAS10750) protein is Polyribonucleotide nucleotidyltransferase.